The following is a 200-amino-acid chain: ATP synthase subunit s, mitochondrial (200 aa).

Residues 1–25 constitute a mitochondrion transit peptide; it reads MMPFGKISQQLCGVKKLPWSCDSRY. The interval 1–61 is N-terminal domain; sequence MMPFGKISQQ…SEWLLRCGAM (61 aa). Residue Gly59 coordinates Mg(2+). LRR repeat units lie at residues 62–87, 88–116, 117–141, and 142–173; these read VRYH…KYKI, QAID…KIRL, CKCH…KTIL, and EMEI…LSDL. Thr93 lines the Mg(2+) pocket.

Belongs to the ATP synthase subunit s family. As to quaternary structure, homotetramer. Associates with ATP synthase.

Its subcellular location is the mitochondrion. It localises to the mitochondrion inner membrane. Functionally, involved in regulation of mitochondrial membrane ATP synthase. Necessary for H(+) conduction of ATP synthase. Facilitates energy-driven catalysis of ATP synthesis by blocking a proton leak through an alternative proton exit pathway. This is ATP synthase subunit s, mitochondrial from Homo sapiens (Human).